Reading from the N-terminus, the 246-residue chain is UDP-N-acetyl-D-mannosaminuronic acid transferase (246 aa).

Belongs to the glycosyltransferase 26 family.

It catalyses the reaction UDP-N-acetyl-alpha-D-mannosaminouronate + N-acetyl-alpha-D-glucosaminyl-di-trans,octa-cis-undecaprenyl diphosphate = beta-D-ManNAcA-(1-&gt;4)-alpha-D-GlcNAc-di-trans,octa-cis-undecaprenyl diphosphate + UDP + H(+). The protein operates within bacterial outer membrane biogenesis; enterobacterial common antigen biosynthesis. Its function is as follows. Catalyzes the synthesis of Und-PP-GlcNAc-ManNAcA (Lipid II), the second lipid-linked intermediate involved in enterobacterial common antigen (ECA) synthesis. This chain is UDP-N-acetyl-D-mannosaminuronic acid transferase, found in Salmonella dublin (strain CT_02021853).